The chain runs to 337 residues: Mitochondrial glutathione transporter SLC25A40 (337 aa).

Solcar repeat units follow at residues 14 to 132 (VTPL…LSTF), 140 to 224 (NETR…LRRW), and 234 to 328 (STFM…GKGF). Helical transmembrane passes span 20 to 40 (MMAS…LDVV), 104 to 124 (LWSG…IYFT), 146 to 166 (IVAG…LELI), 200 to 221 (WAPT…YENL), 240 to 260 (FTAG…FDVV), and 299 to 319 (GLFT…AIMI).

This sequence belongs to the mitochondrial carrier (TC 2.A.29) family. Widely expressed at low level.

The protein resides in the mitochondrion inner membrane. It carries out the reaction glutathione(in) = glutathione(out). In terms of biological role, probable mitochondrial transporter required for glutathione import into mitochondria. Glutathione, which plays key roles in oxidative metabolism, is produced exclusively in the cytosol and is imported in many organelles. Mitochondrial glutathione is required for the activity and stability of proteins containing iron-sulfur clusters, as well as erythropoiesis. The chain is Mitochondrial glutathione transporter SLC25A40 from Rattus norvegicus (Rat).